Consider the following 426-residue polypeptide: Dihydroorotase (426 aa).

Residues H58 and H60 each contribute to the Zn(2+) site. Substrate-binding positions include 60 to 62 (HLR) and N92. D150, H177, and H230 together coordinate Zn(2+). N276 serves as a coordination point for substrate. D303 contacts Zn(2+). The active site involves D303. Substrate-binding positions include H307 and 321 to 322 (FG).

This sequence belongs to the metallo-dependent hydrolases superfamily. DHOase family. Class I DHOase subfamily. It depends on Zn(2+) as a cofactor.

It carries out the reaction (S)-dihydroorotate + H2O = N-carbamoyl-L-aspartate + H(+). Its pathway is pyrimidine metabolism; UMP biosynthesis via de novo pathway; (S)-dihydroorotate from bicarbonate: step 3/3. In terms of biological role, catalyzes the reversible cyclization of carbamoyl aspartate to dihydroorotate. This Listeria welshimeri serovar 6b (strain ATCC 35897 / DSM 20650 / CCUG 15529 / CIP 8149 / NCTC 11857 / SLCC 5334 / V8) protein is Dihydroorotase.